A 63-amino-acid chain; its full sequence is Large ribosomal subunit protein bL28 (63 aa).

This sequence belongs to the bacterial ribosomal protein bL28 family.

The chain is Large ribosomal subunit protein bL28 from Sulfurihydrogenibium sp. (strain YO3AOP1).